The following is a 902-amino-acid chain: Ephrin type-B receptor 1-B (902 aa).

The 119-residue stretch at 1 to 119 (HRVYVEMRFT…FFKKCPSVVQ (119 aa)) folds into the Eph LBD domain. The Extracellular portion of the chain corresponds to 1–459 (HRVYVEMRFT…KSELREQLPL (459 aa)). Fibronectin type-III domains are found at residues 240 to 350 (VPSG…TNQA) and 351 to 448 (APSS…TEED). Residues Asn252, Asn344, and Asn398 are each glycosylated (N-linked (GlcNAc...) asparagine). A helical membrane pass occupies residues 460-480 (IAGSAAAGVVFIVSLVAISIV). Residues 481–902 (CSRKRTYSKE…QISQSPTSIA (422 aa)) lie on the Cytoplasmic side of the membrane. The region spanning 537–800 (VKIEEVIGAG…EIVNTLDKMI (264 aa)) is the Protein kinase domain. ATP contacts are provided by residues 543–551 (IGAGEFGEV) and Lys569. Asp662 serves as the catalytic Proton acceptor. In terms of domain architecture, SAM spans 829–893 (SAFTSVDDWL…LNSIQSMRVQ (65 aa)). Positions 900 to 902 (SIA) match the PDZ-binding motif.

It belongs to the protein kinase superfamily. Tyr protein kinase family. Ephrin receptor subfamily. Heterotetramer upon binding of the ligand. The heterotetramer is composed of an ephrin dimer and a receptor dimer. Oligomerization is probably required to induce biological responses. Phosphorylated. Autophosphorylation is stimulated by ligands. As to expression, expressed in the embryo in the brain and spinal cord and in the first and fourth visceral arches. Most abundant in adult brain, with lower levels in eye, heart, ovary, oviduct, lung and pharynx.

The protein localises to the cell membrane. It is found in the early endosome membrane. Its subcellular location is the cell projection. It localises to the dendrite. It carries out the reaction L-tyrosyl-[protein] + ATP = O-phospho-L-tyrosyl-[protein] + ADP + H(+). In terms of biological role, receptor tyrosine kinase which binds promiscuously transmembrane ephrin-B family ligands residing on adjacent cells, leading to contact-dependent bidirectional signaling into neighboring cells. The signaling pathway downstream of the receptor is referred to as forward signaling while the signaling pathway downstream of the ephrin ligand is referred to as reverse signaling. May play a role in axon guidance during nervous system development. May also play an important redundant role with other ephrin-B receptors in development and maturation of dendritic spines and synapse formation. More generally, may play a role in targeted cell migration and adhesion. Upon activation by ephrin-B ligands activates the MAPK/ERK and the JNK signaling cascades to regulate cell migration and adhesion respectively. This Xenopus laevis (African clawed frog) protein is Ephrin type-B receptor 1-B (ephb1-b).